Consider the following 95-residue polypeptide: UPF0132 membrane protein AF_0736 (95 aa).

Helical transmembrane passes span 2–22, 32–52, and 55–75; these read CYTL…SPFV, TFST…GALL, and VVMA…SRGE.

Belongs to the UPF0132 family.

It is found in the cell membrane. In Archaeoglobus fulgidus (strain ATCC 49558 / DSM 4304 / JCM 9628 / NBRC 100126 / VC-16), this protein is UPF0132 membrane protein AF_0736.